Consider the following 698-residue polypeptide: Nitric oxide-associated protein 1 (698 aa).

A disordered region spans residues 42–66 (FQHSSSLGRELPYDPVDTEGFGEGG). The residue at position 77 (Y77) is a Phosphotyrosine. Disordered stretches follow at residues 80-134 (DPEP…DPAL) and 279-306 (LAPG…PNWS). Residues 102 to 126 (ERQRQQRREERRQQNLRARSREHPV) are compositionally biased toward basic and acidic residues. Residues 202-503 (LELVSAALRR…FYDTPGITKE (302 aa)) form the CP-type G domain.

Belongs to the TRAFAC class YlqF/YawG GTPase family. NOA1 subfamily. As to quaternary structure, homodimer or multimer. Interacts with mitochondrial complex I, DAP3, MRPL12 and MRPS27.

It localises to the mitochondrion inner membrane. Functionally, involved in regulation of mitochondrial protein translation and respiration. Plays a role in mitochondria-mediated cell death. May act as a scaffolding protein or stabilizer of respiratory chain supercomplexes. Binds GTP. The sequence is that of Nitric oxide-associated protein 1 (NOA1) from Homo sapiens (Human).